We begin with the raw amino-acid sequence, 225 residues long: uncharacterized protein (225 aa).

This is an uncharacterized protein from Bacillus subtilis (strain 168).